The following is a 482-amino-acid chain: Immune evasion protein OPG047 (482 aa).

The BTB domain occupies 20–90; sequence KKFKTIIEAI…SYTGKVYIDS (71 aa). Positions 125-222 constitute a BACK domain; that stretch reads CIECYMMGIE…SNYLSPRGIH (98 aa). Kelch repeat units follow at residues 273 to 319, 320 to 363, 365 to 408, 410 to 447, and 448 to 482; these read VVYL…PANN, KLYV…SINN, IYVM…VFGR, LFLVGRNAEFYCESSNTWTLIDDPIYPRDNPELIIVDN, and KLLLIGGFYRGSYIDTIEVYNNRTYSWNIWDGMEW.

It belongs to the orthopoxvirus OPG047 family.

Functionally, might have a role in the suppression of host immune response. In Cynomys gunnisoni (Gunnison's prairie dog), this protein is Immune evasion protein OPG047 (OPG047).